The sequence spans 143 residues: Mediator of RNA polymerase II transcription subunit 22 (143 aa).

The protein belongs to the Mediator complex subunit 22 family. In terms of assembly, component of the Mediator complex, which includes at least CDK8, MED4, MED6, MED11, MED14, MED17, MED18, MED20, MED21, MED22, MED27, MED28, MED30 and MED31.

It is found in the nucleus. Its function is as follows. Component of the Mediator complex, a coactivator involved in the regulated transcription of nearly all RNA polymerase II-dependent genes. Mediator functions as a bridge to convey information from gene-specific regulatory proteins to the basal RNA polymerase II transcription machinery. Mediator is recruited to promoters by direct interactions with regulatory proteins and serves as a scaffold for the assembly of a functional preinitiation complex with RNA polymerase II and the general transcription factors. This chain is Mediator of RNA polymerase II transcription subunit 22 (MED22), found in Drosophila melanogaster (Fruit fly).